The following is a 294-amino-acid chain: Glyceraldehyde-3-phosphate dehydrogenase (294 aa).

NAD(+)-binding residues include aspartate 19, lysine 63, and threonine 105. D-glyceraldehyde 3-phosphate-binding positions include 134-136 (SCT), threonine 165, 194-195 (TG), and arginine 217. Residue cysteine 135 is the Nucleophile of the active site.

The protein belongs to the glyceraldehyde-3-phosphate dehydrogenase family. In terms of assembly, homotetramer.

It localises to the cytoplasm. The catalysed reaction is D-glyceraldehyde 3-phosphate + phosphate + NAD(+) = (2R)-3-phospho-glyceroyl phosphate + NADH + H(+). The protein operates within carbohydrate degradation; glycolysis; pyruvate from D-glyceraldehyde 3-phosphate: step 1/5. Its function is as follows. Catalyzes the oxidative phosphorylation of glyceraldehyde 3-phosphate (G3P) to 1,3-bisphosphoglycerate (BPG) using the cofactor NAD. The first reaction step involves the formation of a hemiacetal intermediate between G3P and a cysteine residue, and this hemiacetal intermediate is then oxidized to a thioester, with concomitant reduction of NAD to NADH. The reduced NADH is then exchanged with the second NAD, and the thioester is attacked by a nucleophilic inorganic phosphate to produce BPG. In Serratia odorifera, this protein is Glyceraldehyde-3-phosphate dehydrogenase (gap).